Here is a 306-residue protein sequence, read N- to C-terminus: Dioxygenase FrzG (306 aa).

Fe cation-binding residues include H132, D134, and H216.

This sequence belongs to the PhyH family. In terms of assembly, homodimer. Fe cation is required as a cofactor.

The catalysed reaction is (1S,4S)-4-[(4-methoxyphenyl)methyl]-2-methyl-2,5-diazaspiro[bicyclo[3.2.1]octane-6,1'-cyclohexan]-4'-one + 2-oxoglutarate + O2 = (2S)-3-(4-methoxyphenyl)-2-[(3S)-3-(methylamino)-8-oxo-1-azaspiro[4.5]decan-1-yl]propanal + succinate + CO2. It participates in secondary metabolite biosynthesis. Its function is as follows. Dioxygenase; part of the gene cluster that mediates the biosynthesis of the alkaloid (-)-FR901483, a potent immunosuppressant that shows efficacy in animal models and a probable inhibitor of purine nucleotide biosynthesis by targeting phosphoribosylpyrophosphate amidotransferase (PPAT). Within the pathway, FrzG cleaves the C9-N10' bond to yield a conjugated iminium. FrzG is also able to catalyze the dehydrogenation between C7 and C8 which leads to a shunt product. The biosynthesis of (-)-FR901483 starts with the condensation of two L-tyrosines to yield (S,S)-dityrosyl-piperazine. This process occurs in 3 steps with the non-canonical nonribosomal peptide synthetase FrzA catalyzing the reduction of L-tyrosine into L-tyrosinal, the spontaneous condensation of 2 L-tyrosinal units, and the subsequent reduction by the NmrA-like family domain-containing oxidoreductase FrzB. The cytochrome P450 monooxygenase FrzC then performs coupling between N10 and C1' to morph the piperazine into a 1,4-diazabicyclo[3.2.1]octane spiro-fused to a 2,5-cyclohexadienone. The dienone portion is further reduced to cyclohexanone by the flavin-dependent reductase FrzD. The methyltranserases (MTs) FrzE and FrzF are then involved in the methylation at the C10' amine and the C4 phenolic oxygen, respectively. The order of the two MTs appear to be interchangeable. Cleavage of the C9-N10' bond by the dioxygenase FrzG then leads to formation of a conjugated iminium. In addition to the oxidation of C9, an additional dehydrogenation between C7 and C8 can occur to give a likely shunt product. The next biosynthetic step is the intramolecular aldol condensation catalyzed by the newly identified aldolase FrzH to yield an aza-tricyclic product with the formation of a C9-C3' bond. The short-chain dehydrogenase/reductase FrzI then produces dephospho-(-)-FR901483 that is phosphorylated at C4'-OH into (-)-FR901483 by the phosphotransferase FrzJ. In Cladobotryum sp, this protein is Dioxygenase FrzG.